Reading from the N-terminus, the 372-residue chain is MTFQFNFTIEDHLENELTPIRDGALTLDSSKELSVSESQKGEERDRKCSAEQFDLPQDHLWEHKSMENAAPSQDTDSPLSAASSSRNLEPHGKQPSLRAAKEHAMPKDLKKMLENKVIETLPGFQHVKLSVVKTILLKENFPGENIVSKSFSSHSDLITGVYEGGLKIWECTFDLLAYFTKAKVKFAGKKVLDLGCGSGLLGITAFKGGSKEIHFQDYNSMVIDEVTLPNVVANSTLEDEENDVNEPDVKRCRKPKVTQLYKCRFFSGEWSEFCKLVLSSEKLFVKYDLILTSETIYNPDYYSNLHQTFLRLLSKNGRVLLASKAHYFGVGGGVHLFQKFVEERDVFKTRILKIIDEGLKRFIIEITFKFPG.

2 disordered regions span residues 30–55 (SKEL…QFDL) and 68–103 (NAAP…AKEH). Residues 39-49 (QKGEERDRKCS) are compositionally biased toward basic and acidic residues. Positions 70 to 87 (APSQDTDSPLSAASSSRN) are enriched in polar residues. A phosphoserine mark is found at Ser72 and Ser77. His154 is modified (tele-methylhistidine; by autocatalysis). Residues 168 to 172 (IWECT), Gly195, and 216 to 218 (QDY) each bind S-adenosyl-L-methionine. A Nuclear localization signal motif is present at residues 247–253 (PDVKRCR). Residues 268–270 (GEW) and Ser293 contribute to the S-adenosyl-L-methionine site.

The protein belongs to the methyltransferase superfamily. METTL18 family. As to quaternary structure, interacts with GRWD1 and members of the heat shock protein 90 and 70 families; these proteins may possibly be methylation substrates for the enzyme. Monomethylated at His-154 through automethylation. Automethylation at His-154 positively regulates the methyltransferase activity toward RPL3. Probably methylated on other residues.

It localises to the cytoplasm. It is found in the cytosol. The protein localises to the nucleus. The protein resides in the nucleolus. It catalyses the reaction L-histidyl-[protein] + S-adenosyl-L-methionine = N(tele)-methyl-L-histidyl-[protein] + S-adenosyl-L-homocysteine + H(+). Functionally, protein-L-histidine N-tele-methyltransferase that specifically monomethylates RPL3, thereby regulating translation elongation. Histidine methylation of RPL3 regulates translation elongation by slowing ribosome traversal on tyrosine codons: slower elongation provides enough time for proper folding of synthesized proteins and prevents cellular aggregation of tyrosine-rich proteins. This is Histidine protein methyltransferase 1 homolog from Homo sapiens (Human).